A 121-amino-acid polypeptide reads, in one-letter code: Chorion class A proteins Ld9 (121 aa).

This sequence belongs to the chorion protein family.

This protein is one of many from the eggshell of the gypsy moth. This Lymantria dispar (Gypsy moth) protein is Chorion class A proteins Ld9.